The primary structure comprises 81 residues: Protein Vpu (81 aa).

Residues 1-7 (MQPLQIL) lie on the Extracellular side of the membrane. Residues 8–28 (SIVALVVAAIIAIVVWSIVFI) form a helical membrane-spanning segment. Residues 29–81 (LIRKILRQRKIDRLIDRIRERAEDSGNESEGIRKELSALVEMGHDAPGDIDDL) are Cytoplasmic-facing. A phosphoserine; by host CK2 mark is found at Ser53 and Ser57.

It belongs to the HIV-1 VPU protein family. Homopentamer. Interacts with host CD4 and BRTC; these interactions induce proteasomal degradation of CD4. Interacts with host BST2; this interaction leads to the degradation of host BST2. Interacts with host FBXW11. Interacts with host AP1M1; this interaction plays a role in the mistrafficking and subsequent degradation of host BST2. Interacts with host RANBP2; this interaction allows Vpu to down-regulate host BLM sumoylation. Phosphorylated by host CK2. This phosphorylation is necessary for interaction with human BTRC and degradation of CD4.

The protein localises to the host membrane. Ion channel activity is inhibited by hexamethylene amiloride in vitro. Its function is as follows. Enhances virion budding by targeting host CD4 and Tetherin/BST2 to proteasome degradation. Degradation of CD4 prevents any unwanted premature interactions between viral Env and its host receptor CD4 in the endoplasmic reticulum. Degradation of antiretroviral protein Tetherin/BST2 is important for virion budding, as BST2 tethers new viral particles to the host cell membrane. Mechanistically, Vpu bridges either CD4 or BST2 to BTRC, a substrate recognition subunit of the Skp1/Cullin/F-box protein E3 ubiquitin ligase, induces their ubiquitination and subsequent proteasomal degradation. The alteration of the E3 ligase specificity by Vpu seems to promote the degradation of host IKBKB, leading to NF-kappa-B down-regulation and subsequent apoptosis. Acts as a viroporin that forms an oligomeric ion channel in membranes. Modulates the host DNA repair mechanisms to promote degradation of nuclear viral cDNA in cells that are already productively infected in order to suppress immune sensing and proviral hyper-integration (superinfection). Manipulates PML-NBs and modulates SUMOylation of host BLM protein thereby enhancing its DNA-end processing activity toward viral unintegrated linear DNA. Also inhibits RAD52-mediated homologous repair of viral cDNA, preventing the generation of dead-end circular forms of single copies of the long terminal repeat and permitting sustained nucleolytic attack. This chain is Protein Vpu, found in Homo sapiens (Human).